The sequence spans 487 residues: L-tartrate/succinate antiporter (487 aa).

The next 14 membrane-spanning stretches (helical) occupy residues 10-30 (YLAP…AGLE), 33-53 (TWLY…EPVP), 54-74 (GAVV…WLLF), 93-113 (WAVS…FMFG), 137-157 (TLFL…VTPS), 189-209 (IGSY…AIFL), 236-256 (FLGM…LAYV), 292-312 (LMVG…AAMV), 313-333 (GYSV…DIVS), 340-360 (VFFW…TGFI), 370-390 (SLSG…FYLL), 393-413 (FFAS…AAAL), 418-438 (IPLP…SILT), and 462-482 (LGAI…LLWM).

It belongs to the SLC13A/DASS transporter (TC 2.A.47) family. DIT1 subfamily.

It localises to the cell inner membrane. The enzyme catalyses (2R,3R)-tartrate(out) + succinate(in) = (2R,3R)-tartrate(in) + succinate(out). Its function is as follows. Catalyzes the uptake of tartrate in exchange for intracellular succinate. Essential for anaerobic L-tartrate fermentation. The polypeptide is L-tartrate/succinate antiporter (ttdT) (Escherichia coli O6:H1 (strain CFT073 / ATCC 700928 / UPEC)).